Reading from the N-terminus, the 418-residue chain is MAGIKIIKENVDRETFEALAEICPFDAFSYENDKLEVTAACKMCKMCLKKGPEGVLILEEDEKVAIDKSLYRGITVYVDHIEGQIHPVTFELIGKARELAAVIGHPVYALLMGTNITEKADELLKYGVDKVFVYDKPELKHFVIEPYANVLEDFIEKVKPSSILVGATNVGRSLAPRVAARYRTGLTADCTILEMKENTDLVQIRPAFGGNIMAQIVTENTRPQFCTVRYKVFTAPERVNEPWGDVEMMDIEKAKLVSAIEVMEVIKKEKGIDLSEAETIVAVGRGVKCEKDLDMIHEFAEKIGATVACTRPGIEAGWFDARLQIGLSGRTVKPKLIIALGISGAVQFAAGMQNSEYIIAINSDPKAPIFNIAHCGMVGDLYEILPELLTMIEGPENNKDTETISIPEAIETPERMVV.

FAD contacts are provided by residues R285, 325–328, 343–348, N362, and 380–381; these read IGLS, SGAVQF, and DL.

Belongs to the ETF alpha-subunit/FixB family. As to quaternary structure, part of the stable heterotrimeric lactate dehydrogenase-Etf complex, which is formed by the lactate dehydrogenase LctD and the electron-transferring flavoprotein (Etf) alpha (LctC) and beta (LctB) subunits. It depends on FAD as a cofactor. [4Fe-4S] cluster serves as cofactor.

It localises to the cytoplasm. It catalyses the reaction lactate + 2 reduced [2Fe-2S]-[ferredoxin] + 2 NAD(+) = 2 oxidized [2Fe-2S]-[ferredoxin] + pyruvate + 2 NADH. Its activity is regulated as follows. Activity is stimulated by divalent cations. Highest stimulation is observed with Ca(2+). Functionally, the lactate dehydrogenase-Etf complex catalyzes the oxidation of lactate to pyruvate. It uses flavin-based electron confurcation to drive endergonic lactate oxidation with NAD(+) as oxidant at the expense of simultaneous exergonic electron flow from reduced ferredoxin to NAD(+). The electron transfer flavoprotein (Etf) mediates the electron transfer between the different donors and acceptors. This Acetobacterium woodii (strain ATCC 29683 / DSM 1030 / JCM 2381 / KCTC 1655 / WB1) protein is Lactate dehydrogenase (NAD(+),ferredoxin) subunit LctC.